Reading from the N-terminus, the 102-residue chain is uncharacterized protein (102 aa).

This is an uncharacterized protein from Enterobacteria phage T4 (Bacteriophage T4).